Reading from the N-terminus, the 834-residue chain is Enhancer of filamentation 1 (834 aa).

Residues 1–505 form a required for interaction with ITCH region; the sequence is MKYKNLMARA…HQILSQTSHD (505 aa). The SH3 domain maps to 3–65; sequence YKNLMARALY…PGNRVKLLIG (63 aa). Phosphotyrosine; by ABL1 occurs at positions 92, 164, 166, 177, 189, 214, and 223. The interacts strongly with spindle-regulatory protein D1M1 stretch occupies residues 102–229; sequence RDTIYQVPPS…KGVYAIPPSA (128 aa). The disordered stretch occupies residues 238–260; the sequence is EKDYDFPPPMRQAGRPDLRPEGV. Tyr-279 is subject to Phosphotyrosine; by ABL1. The segment at 291-316 is disordered; that stretch reads ARRHQSLSPNHPPPQLGQSVGSQNDA. A Phosphoserine modification is found at Ser-296. The span at 306–315 shows a compositional bias: polar residues; sequence LGQSVGSQND. Position 317 is a phosphotyrosine; by ABL1 (Tyr-317). Disordered regions lie at residues 328-398 and 560-623; these read PPAE…SPAQ and GPGS…GSER. The span at 332-344 shows a compositional bias: basic and acidic residues; sequence TSEKANPQERDGV. Residues 351–834 form an interacts with CTTN region; that stretch reads NPPDAKGSRD…KRSLLEMATF (484 aa). The Caspase cleavage related site signature appears at 360–363; that stretch reads DLVD. Ser-369 carries the phosphoserine modification. A compositionally biased stretch (low complexity) spans 369–395; that stretch reads SFSSTGSTRSNMSTSSTSSKESSLSAS. The tract at residues 710–760 is divergent helix-loop-helix motif; the sequence is FYYDQCETHFISLLNAIDALFSCVSSAQPPRIFVAHSKFVILSAHKLVFIG. Positions 710-834 are required for interaction with PLK1; it reads FYYDQCETHF…KRSLLEMATF (125 aa). Ser-780 is modified (phosphoserine; by CSNK1D and CSNK1E). Position 804 is a phosphothreonine; by CSNK1E (Thr-804).

This sequence belongs to the CAS family. In terms of assembly, homodimer. Forms heterodimers with BCAR1/p130cas. Forms complexes with PTK2B/RAFTK, adapter protein CRKL and LYN kinase. Part of a complex composed of NEDD9, AURKA and CTTN; within the complex NEDD9 acts as a scaffold protein and is required for complex formation. Part of a ternary complex composed of SMAD3, ITCH/AIP4 and NEDD9/HEF1; within the complex NEDD9/HEF1 interacts (via N-terminus) with ITCH/AIP4 (via WW domains); the complex mediates ubiquitination and proteasomal degradation of NEDD9/HEF1. Interacts with SMAD3; the interaction promotes NEDD9 ubiquitination and proteasomal degradation. Interacts with ID2. Interacts with CTTN (via N-terminus). Interacts with MICAL. Interacts with TXNL4/DIM1. Interacts with BCAR3 (via Ras-GEF domain). Interacts with SH2D3C isoform 1 and isoform 2. Interacts with ECT2. Interacts with PTPN11/SHP-2 (via SH2 domains); the interaction is enhanced when NEDD9/CAS-L is tyrosine phosphorylated. Interacts (via C-terminus) with PLK1 (via polo box domains). Interacts with NKX2-5. Interacts with SMAD3; the interaction is inhibited by oxidation of NEDD9. Interacts with NEDD9/HEF1; interaction is induced by CXCL12 promotion of ABL-mediated phosphorylation of NEDD9/HEF1. Interacts (via SH3 domain) with PTK2/FAK. Interacts with FYN; in the presence of PTK2. Interacts with INPPL1/SHIP2. In terms of processing, cell cycle-regulated processing produces four isoforms: p115, p105, p65, and p55. Isoform p115 arises from p105 phosphorylation and appears later in the cell cycle. Isoform p55 arises from p105 as a result of cleavage at a caspase cleavage-related site and it appears specifically at mitosis. The p65 isoform is poorly detected. Post-translationally, polyubiquitinated by ITCH/AIP4, leading to proteasomal degradation. PTK2/FAK1 phosphorylates the protein at the YDYVHL motif (conserved among all cas proteins) following integrin stimulation. The SRC family kinases (FYN, SRC, LCK and CRK) are recruited to the phosphorylated sites and can phosphorylate other tyrosine residues. Ligation of either integrin beta-1 or B-cell antigen receptor on tonsillar B-cells and B-cell lines promotes tyrosine phosphorylation and both integrin and BCR-mediated tyrosine phosphorylation requires an intact actin network. Phosphorylation is required to recruit NEDD9 to T-cell receptor microclusters at the periphery of newly formed immunological synapses. In fibroblasts transformation with oncogene v-ABL results in an increase in tyrosine phosphorylation. Transiently phosphorylated following CD3 cross-linking and this phosphorylated form binds to CRKL and C3G. A mutant lacking the SH3 domain is phosphorylated upon CD3 cross-linking but not upon integrin beta-1 cross-linking. Tyrosine phosphorylation occurs upon stimulation of the G-protein coupled C1a calcitonin receptor. Calcitonin-stimulated tyrosine phosphorylation is mediated by calcium- and protein kinase C-dependent mechanisms and requires the integrity of the actin cytoskeleton. Phosphorylation at Ser-369 induces proteasomal degradation. Phosphorylated by LYN. Phosphorylation at Ser-780 by CSNK1D or CSNK1E, or phosphorylation of Thr-804 by CSNK1E enhances the interaction of NEDD9 with PLK1. Expressed in B-cells (at protein level). Expressed in the respiratory epithelium of the main bronchi to the bronchioles in the lungs (at protein level). High levels detected in kidney, lung, and placenta. Expressed in lymphocytes.

Its subcellular location is the cytoplasm. It is found in the cell cortex. It localises to the nucleus. The protein resides in the golgi apparatus. The protein localises to the cell projection. Its subcellular location is the lamellipodium. It is found in the cell junction. It localises to the focal adhesion. The protein resides in the cytoskeleton. The protein localises to the spindle pole. Its subcellular location is the cilium. It is found in the cilium basal body. It localises to the basolateral cell membrane. The protein resides in the spindle. Scaffolding protein which plays a central coordinating role for tyrosine-kinase-based signaling related to cell adhesion. As a focal adhesion protein, plays a role in embryonic fibroblast migration. May play an important role in integrin beta-1 or B cell antigen receptor (BCR) mediated signaling in B- and T-cells. Integrin beta-1 stimulation leads to recruitment of various proteins including CRKL and SHPTP2 to the tyrosine phosphorylated form. Promotes adhesion and migration of lymphocytes; as a result required for the correct migration of lymphocytes to the spleen and other secondary lymphoid organs. Plays a role in the organization of T-cell F-actin cortical cytoskeleton and the centralization of T-cell receptor microclusters at the immunological synapse. Negatively regulates cilia outgrowth in polarized cysts. Modulates cilia disassembly via activation of AURKA-mediated phosphorylation of HDAC6 and subsequent deacetylation of alpha-tubulin. Positively regulates RANKL-induced osteoclastogenesis. Required for the maintenance of hippocampal dendritic spines in the dentate gyrus and CA1 regions, thereby involved in spatial learning and memory. The chain is Enhancer of filamentation 1 from Homo sapiens (Human).